We begin with the raw amino-acid sequence, 217 residues long: Ribonuclease HII (217 aa).

The 191-residue stretch at 25 to 215 (KLIAGVDESG…VKHVISDINR (191 aa)) folds into the RNase H type-2 domain. Residues Asp-31, Glu-32, and Asp-123 each contribute to the a divalent metal cation site.

This sequence belongs to the RNase HII family. Mn(2+) serves as cofactor. The cofactor is Mg(2+).

It is found in the cytoplasm. The catalysed reaction is Endonucleolytic cleavage to 5'-phosphomonoester.. In terms of biological role, endonuclease that specifically degrades the RNA of RNA-DNA hybrids. This Blochmanniella pennsylvanica (strain BPEN) protein is Ribonuclease HII.